The primary structure comprises 446 residues: Probable glucan endo-1,3-beta-glucosidase eglC (446 aa).

A signal peptide spans Met-1–Ala-18. Residue Glu-128 is the Proton donor of the active site. Residue Asn-183 is glycosylated (N-linked (GlcNAc...) asparagine). Glu-239 (nucleophile) is an active-site residue. 2 N-linked (GlcNAc...) asparagine glycosylation sites follow: Asn-364 and Asn-370. The tract at residues Ser-393–Ser-416 is disordered. Positions Ala-401–Ser-416 are enriched in low complexity. Asn-423 carries GPI-anchor amidated asparagine lipidation. Positions Ala-424–Leu-446 are cleaved as a propeptide — removed in mature form.

The protein belongs to the glycosyl hydrolase 17 family. In terms of processing, the GPI-anchor is attached to the protein in the endoplasmic reticulum and serves to target the protein to the cell surface. There, the glucosamine-inositol phospholipid moiety is cleaved off and the GPI-modified mannoprotein is covalently attached via its lipidless GPI glycan remnant to the 1,6-beta-glucan of the outer cell wall layer.

Its subcellular location is the cell membrane. It localises to the secreted. The protein resides in the cell wall. The catalysed reaction is Hydrolysis of (1-&gt;3)-beta-D-glucosidic linkages in (1-&gt;3)-beta-D-glucans.. Functionally, glucanases play a role in cell expansion during growth, in cell-cell fusion during mating, and in spore release during sporulation. This enzyme may be involved in beta-glucan degradation and also function biosynthetically as a transglycosylase. This chain is Probable glucan endo-1,3-beta-glucosidase eglC (eglC), found in Aspergillus fumigatus (strain ATCC MYA-4609 / CBS 101355 / FGSC A1100 / Af293) (Neosartorya fumigata).